Reading from the N-terminus, the 534-residue chain is Nuclear polyadenylated RNA-binding protein 4 (534 aa).

The interval 1-154 (MSSDEEDFND…TKEERSKADL (154 aa)) is disordered. Serine 2 and serine 3 each carry phosphoserine. Residues 13–30 (GDDKPTTTEEVKKEEEQN) show a composition bias toward basic and acidic residues. Over residues 37–78 (SQLDQLAALQALSSSLNKLNNPNSNNSSSNNSNQDTSSSKQD) the composition is skewed to low complexity. A phosphoserine mark is found at serine 51 and serine 87. Over residues 81 to 98 (ANDKEGSNEDTKNEKKQE) the composition is skewed to basic and acidic residues. 2 stretches are compositionally biased toward low complexity: residues 99-112 (SATS…ASSA) and 121-144 (QLQQ…QVTQ). Over residues 145 to 154 (TKEERSKADL) the composition is skewed to basic and acidic residues. RRM domains are found at residues 159–241 (CKMF…EQDK) and 243–320 (GKIF…RAEP). The residue at position 206 (serine 206) is a Phosphoserine. Disordered regions lie at residues 316-354 (KRAE…DFNQ) and 415-534 (MPPN…PYNR). Residues 336–354 (GNNMNRRGGNFGNQGDFNQ) are compositionally biased toward low complexity. Residues 420–459 (MTLNQPQQDSNATQGSPAPSDSDNNKSNDVQTIGNTSNTD) are compositionally biased toward polar residues. Threonine 458 is modified (phosphothreonine). Residues serine 460 and serine 462 each carry the phosphoserine modification. Residues 460 to 475 (SGSPPLNLPNGPKGPS) are compositionally biased toward low complexity. The span at 478-505 (NDDHNSGYGYNRDRGDRDRNDRDRDYNH) shows a compositional bias: basic and acidic residues. Arginine 519 carries the post-translational modification Omega-N-methylarginine. Residues 523 to 534 (NRRNNGYHPYNR) show a composition bias toward low complexity.

In terms of assembly, interacts with NAM7. In terms of processing, methylated by HMT1. The methylation is required for nuclear export.

It is found in the cytoplasm. The protein localises to the nucleus. Its subcellular location is the stress granule. RNA-binding protein, which is involved in the polyadenylation-dependent pre-mRNA 3'-end formation and cooperates with the cleavage factor CFIA complex and the cleavage and polyadenylation factor (CPF) complex. May be involved in regulation of poly(A) site selection. Is involved in nonsense-mediated mRNA decay. Seems to bind to an RNA downstream sequence element (DSE) located 3' of a nonsense codon and may mark the transcript for decay. In Saccharomyces cerevisiae (strain ATCC 204508 / S288c) (Baker's yeast), this protein is Nuclear polyadenylated RNA-binding protein 4.